Reading from the N-terminus, the 314-residue chain is Olfactory receptor 9A4 (314 aa).

The Extracellular portion of the chain corresponds to 1–24; that stretch reads MLMNYSSATEFYLLGFPGSEELHH. The N-linked (GlcNAc...) asparagine glycan is linked to N4. A helical membrane pass occupies residues 25-45; it reads ILFAIFFFFYLVTLMGNTVII. At 46–53 the chain is on the cytoplasmic side; the sequence is MIVCVDKR. Residues 54-74 traverse the membrane as a helical segment; that stretch reads LQSPMYFFLGHLSALEILVTT. The Extracellular portion of the chain corresponds to 75 to 99; sequence IIVPVMLWGLLLPGMQTIYLSACVV. The cysteines at positions 97 and 189 are disulfide-linked. A helical membrane pass occupies residues 100–120; that stretch reads QLFLYLAVGTTEFALLGAMAV. Over 121–139 the chain is Cytoplasmic; sequence DRYVAVCNPLRYNIIMNRH. Residues 140-160 form a helical membrane-spanning segment; that stretch reads TCNFVVLVSWVFGFLFQIWPV. Topologically, residues 161-197 are extracellular; sequence YVMFQLTYCKSNVVNNFFCDRGQLLKLSCNNTLFTEF. A glycan (N-linked (GlcNAc...) asparagine) is linked at N190. The chain crosses the membrane as a helical span at residues 198 to 217; sequence ILFLMAVFVLFGSLIPTIVS. At 218 to 237 the chain is on the cytoplasmic side; it reads NAYIISTILKIPSSSGRRKS. Residues 238–258 form a helical membrane-spanning segment; that stretch reads FSTCASHFTCVVIGYGSCLFL. Residues 259 to 271 lie on the Extracellular side of the membrane; the sequence is YVKPKQTQAADYN. Residues 272 to 292 form a helical membrane-spanning segment; it reads WVVSLMVSVVTPFLNPFIFTL. Residues 293–314 are Cytoplasmic-facing; sequence RNDKVIEALRDGVKRCCQLFRN.

This sequence belongs to the G-protein coupled receptor 1 family.

It localises to the cell membrane. In terms of biological role, odorant receptor. The polypeptide is Olfactory receptor 9A4 (OR9A4) (Homo sapiens (Human)).